The sequence spans 137 residues: 2-iminobutanoate/2-iminopropanoate deaminase (137 aa).

Residue serine 2 is modified to N-acetylserine. N6-succinyllysine occurs at positions 13 and 67. Threonine 74 bears the Phosphothreonine mark. Position 136 is a phosphoserine (serine 136).

It belongs to the RutC family. In terms of assembly, homotrimer. Interacts with YTHDF2.

The protein localises to the cytoplasm. It localises to the nucleus. It is found in the peroxisome. The protein resides in the mitochondrion. The catalysed reaction is 2-iminobutanoate + H2O = 2-oxobutanoate + NH4(+). It carries out the reaction 2-iminopropanoate + H2O = pyruvate + NH4(+). Its function is as follows. Catalyzes the hydrolytic deamination of enamine/imine intermediates that form during the course of normal metabolism. May facilitate the release of ammonia from these potentially toxic reactive metabolites, reducing their impact on cellular components. It may act on enamine/imine intermediates formed by several types of pyridoxal-5'-phosphate-dependent dehydratases including L-threonine dehydratase. Functionally, also promotes endoribonucleolytic cleavage of some transcripts by promoting recruitment of the ribonuclease P/MRP complex. Acts by bridging YTHDF2 and the ribonuclease P/MRP complex. RIDA/HRSP12 binds to N6-methyladenosine (m6A)-containing mRNAs containing a 5'-GGUUC-3' motif: cooperative binding of RIDA/HRSP12 and YTHDF2 to such transcripts lead to recruitment of the ribonuclease P/MRP complex and subsequent endoribonucleolytic cleavage. The protein is 2-iminobutanoate/2-iminopropanoate deaminase of Bos taurus (Bovine).